The following is a 408-amino-acid chain: Prenyltransferase criF (408 aa).

Positions 94, 181, 183, 248, 250, 252, 334, 336, 400, and 404 each coordinate dimethylallyl diphosphate.

It belongs to the tryptophan dimethylallyltransferase family. As to quaternary structure, homodimer.

It catalyses the reaction preechinulin + dimethylallyl diphosphate = tardioxopiperazine B + diphosphate. The enzyme catalyses preechinulin + dimethylallyl diphosphate = tardioxopiperazine A + diphosphate. It carries out the reaction tardioxopiperazine A + dimethylallyl diphosphate = echinulin + diphosphate. The catalysed reaction is tardioxopiperazine A + dimethylallyl diphosphate = variecolorin L + diphosphate. It catalyses the reaction neoechinulin A + dimethylallyl diphosphate = variecolorin G + diphosphate. The enzyme catalyses neoechinulin A + dimethylallyl diphosphate = isoechinulin A + diphosphate. It carries out the reaction isoechinulin A + dimethylallyl diphosphate = dehydroechinulin + diphosphate. The catalysed reaction is neoechinulin B + dimethylallyl diphosphate = isoechinulin B + diphosphate. Its pathway is secondary metabolite biosynthesis. The protein operates within alkaloid biosynthesis. Functionally, prenyltransferase; part of the gene cluster that mediates the biosynthesis of echinulin family alkaloid. The pathway begins with the biosynthesis of the cyclic dipeptide cyclo-L-Trp-L-Ala (cyclo-TA) by the NRPS criC via condensation of L-alanine and L-tryptophan. The prenyltransferase criA then catalyzes the first prenylation step, a reverse prenylation reaction at C2, to yield preechinulin. Preechinulin is the substrate of the cytochrome P450 monooxygenase criE that catalyzes the formation of the double bond between C10 and C11 to produce neoechulin A. The unique prenyltransferase criF functions as a competitive enzyme with criE for preechinulin metabolization and uses preechinulin for effective regiospecific prenylations. Preechinulin is prenylated by criF at C5 or C7. C7-prenylation leads to accumulation of tardioxopiperazine B without further modification by criF. In contrast, the C5-prenylated tardioxopiperazine A can be prenylated again by criF, predominantly at C7 to form echinulin or less frequently at C4 to give variecolorin L. CriF also accepts neoechilunin A to produce varlecolorin G (prenylation at C5) or isoechinulin A (prenylation at C7). CriF further converts isoechinulin A into dehydroechinulin. Moreover, a yet unidentified enzyme can also convert neoechilunin A into neoechilunin B by introducing a double bond between positions C14 and C17 and thus provides a further substrate to criF for C5 and C7 prenylation. This Aspergillus cristatus (Chinese Fuzhuan brick tea-fermentation fungus) protein is Prenyltransferase criF.